Consider the following 154-residue polypeptide: Myoglobin (154 aa).

Residues 2-148 (GLSDGEWQLV…FRNDMAAKYK (147 aa)) form the Globin domain. Ser-4 carries the phosphoserine modification. His-65 contacts nitrite. O2 is bound at residue His-65. Thr-68 bears the Phosphothreonine mark. Position 94 (His-94) interacts with heme b.

Belongs to the globin family. As to quaternary structure, monomeric.

It is found in the cytoplasm. Its subcellular location is the sarcoplasm. The catalysed reaction is Fe(III)-heme b-[protein] + nitric oxide + H2O = Fe(II)-heme b-[protein] + nitrite + 2 H(+). The enzyme catalyses H2O2 + AH2 = A + 2 H2O. In terms of biological role, monomeric heme protein which primary function is to store oxygen and facilitate its diffusion within muscle tissues. Reversibly binds oxygen through a pentacoordinated heme iron and enables its timely and efficient release as needed during periods of heightened demand. Depending on the oxidative conditions of tissues and cells, and in addition to its ability to bind oxygen, it also has a nitrite reductase activity whereby it regulates the production of bioactive nitric oxide. Under stress conditions, like hypoxia and anoxia, it also protects cells against reactive oxygen species thanks to its pseudoperoxidase activity. This Didelphis virginiana (North American opossum) protein is Myoglobin (MB).